We begin with the raw amino-acid sequence, 380 residues long: Glucose-1-phosphate adenylyltransferase (380 aa).

Alpha-D-glucose 1-phosphate is bound by residues Y99, G164, 179–180 (EK), and S190.

This sequence belongs to the bacterial/plant glucose-1-phosphate adenylyltransferase family. As to quaternary structure, homotetramer.

It carries out the reaction alpha-D-glucose 1-phosphate + ATP + H(+) = ADP-alpha-D-glucose + diphosphate. The protein operates within glycan biosynthesis; glycogen biosynthesis. In terms of biological role, involved in the biosynthesis of ADP-glucose, a building block required for the elongation reactions to produce glycogen. Catalyzes the reaction between ATP and alpha-D-glucose 1-phosphate (G1P) to produce pyrophosphate and ADP-Glc. This chain is Glucose-1-phosphate adenylyltransferase, found in Bacillus subtilis (strain 168).